The sequence spans 453 residues: MQVKETVADGLKREFEVTLQAADIGAKVAARLDDMKDKVRLNGFRPGKVPIGHLKRIYGRSVTAETVEKLIRETNDQIFTERGFRLATEPKITMPSKENEVEEILAGKSDLNYTVAVEVVPTIELADFKSFSVEKPVAEVADSDVDEAINRIAMGNRSYADKGEGAKAESGDRVTISFKGTIDGTPFDGGTGEGIQVVIGSATFIPGFEDQLIGIGAGETRTLKVEFPKNYTNAELAGKPAEFETTATVLEAPQESVIDDEFAKTLGFESLDKLKEAARGRLTAEYAGATRQRVKRVLLDRLDETHRFEAPPSLVEQEFDLMWRSIKAEMESGGKTFESENTTEEAAKEEYRKIADRRVRLGLVLSEIGEKNKITVTDDEVSRAVIERARQMPGHEKEVWEYYRNNAEALAQLRAPIYEDKVVDFILELANVTEKTVSREELYKDDDAEKTAA.

The 86-residue stretch at 171-256 (GDRVTISFKG…ATVLEAPQES (86 aa)) folds into the PPIase FKBP-type domain.

This sequence belongs to the FKBP-type PPIase family. Tig subfamily.

Its subcellular location is the cytoplasm. The catalysed reaction is [protein]-peptidylproline (omega=180) = [protein]-peptidylproline (omega=0). In terms of biological role, involved in protein export. Acts as a chaperone by maintaining the newly synthesized protein in an open conformation. Functions as a peptidyl-prolyl cis-trans isomerase. This Rhodopseudomonas palustris (strain BisB18) protein is Trigger factor.